An 806-amino-acid chain; its full sequence is Phenylalanine--tRNA ligase beta subunit (806 aa).

In terms of domain architecture, tRNA-binding spans 40 to 155; it reads NKGVKGVVVG…SDAEVGADAL (116 aa). A B5 domain is found at 409–484; the sequence is VQERTVSVTA…RLYGYDHIPV (76 aa). Residues Asp462, Asp468, Glu471, and Glu472 each contribute to the Mg(2+) site. In terms of domain architecture, FDX-ACB spans 712–805; sequence PRFPSMTRDM…VEEKFGAELR (94 aa).

This sequence belongs to the phenylalanyl-tRNA synthetase beta subunit family. Type 1 subfamily. Tetramer of two alpha and two beta subunits. It depends on Mg(2+) as a cofactor.

Its subcellular location is the cytoplasm. It catalyses the reaction tRNA(Phe) + L-phenylalanine + ATP = L-phenylalanyl-tRNA(Phe) + AMP + diphosphate + H(+). The polypeptide is Phenylalanine--tRNA ligase beta subunit (Bacillus cereus (strain ZK / E33L)).